The following is a 221-amino-acid chain: Pyridoxine/pyridoxamine 5'-phosphate oxidase (221 aa).

A disordered region spans residues 1-21 (MDYSDPAELRESYDGAPLDPR). Residues 10–13 (RESY) and K68 contribute to the substrate site. FMN is bound by residues 63-68 (RTVLLK), 78-79 (FT), R84, K85, and Q107. Substrate-binding residues include Y125, R129, and S133. FMN contacts are provided by residues 143–144 (QS) and W189. Residue 195–197 (RMH) coordinates substrate. R199 provides a ligand contact to FMN.

Belongs to the pyridoxamine 5'-phosphate oxidase family. Homodimer. The cofactor is FMN.

The enzyme catalyses pyridoxamine 5'-phosphate + O2 + H2O = pyridoxal 5'-phosphate + H2O2 + NH4(+). It carries out the reaction pyridoxine 5'-phosphate + O2 = pyridoxal 5'-phosphate + H2O2. It participates in cofactor metabolism; pyridoxal 5'-phosphate salvage; pyridoxal 5'-phosphate from pyridoxamine 5'-phosphate: step 1/1. Its pathway is cofactor metabolism; pyridoxal 5'-phosphate salvage; pyridoxal 5'-phosphate from pyridoxine 5'-phosphate: step 1/1. Functionally, catalyzes the oxidation of either pyridoxine 5'-phosphate (PNP) or pyridoxamine 5'-phosphate (PMP) into pyridoxal 5'-phosphate (PLP). The sequence is that of Pyridoxine/pyridoxamine 5'-phosphate oxidase from Thermobifida fusca (strain YX).